Consider the following 428-residue polypeptide: Adenylosuccinate synthetase (428 aa).

GTP-binding positions include 12–18 (GDEGKGK) and 40–42 (GHT). Asp-13 acts as the Proton acceptor in catalysis. 2 residues coordinate Mg(2+): Asp-13 and Gly-40. Residues 13 to 16 (DEGK), 38 to 41 (NAGH), Thr-130, Arg-144, Gln-225, Thr-240, and Arg-304 each bind IMP. His-41 serves as the catalytic Proton donor. Substrate is bound at residue 300 to 306 (TTTGRPR). GTP is bound by residues Arg-306, 332 to 334 (KLD), and 414 to 416 (SVG).

This sequence belongs to the adenylosuccinate synthetase family. In terms of assembly, homodimer. The cofactor is Mg(2+).

The protein localises to the cytoplasm. It carries out the reaction IMP + L-aspartate + GTP = N(6)-(1,2-dicarboxyethyl)-AMP + GDP + phosphate + 2 H(+). The protein operates within purine metabolism; AMP biosynthesis via de novo pathway; AMP from IMP: step 1/2. Its function is as follows. Plays an important role in the de novo pathway of purine nucleotide biosynthesis. Catalyzes the first committed step in the biosynthesis of AMP from IMP. The protein is Adenylosuccinate synthetase of Caldanaerobacter subterraneus subsp. tengcongensis (strain DSM 15242 / JCM 11007 / NBRC 100824 / MB4) (Thermoanaerobacter tengcongensis).